Reading from the N-terminus, the 678-residue chain is MPNDPLLQPYQLKHLTLRNRIIVTAHEPAYPEDGMPKERYRAYTVERARGGVAMTMTAGSAAVSKDSPPVFNNLLAYRDEIVPWIREMTDAVHEEGAVIMIQLTHLGRRTRWDKGDWLPVVAPSHHREAAHRAFPKKIEDWDIDRIIKDFADAAERMKAGGMDGVELEAYGHLIDQFASPLTNELDGPYGGSLDNRMRFCFDVLKAIRARVGDEFILGVRYTADECLPGGTDKAEGLEISKRLKESGLIDYLNIIRGHIDTDPGLTDVIPIQGMANSPHLDFAGEIRAATNFPTFHAAKIPDVATARHAIASGKVDMVGMTRAHMTDPHIVRKIIEKREEDIRPCVGANYCLDRIYQGGAAYCIHNAATGRELTMPHSIAKAHCRRKVVVVGTGPAGLEAARVAGERGHEVIVFEAASDPGGQVRLTAQSPRRREMISIIDWRMSQCEKLGVTFHFNTWAEAEAIQAESPDVVIIATGGLPHTEVLSRGNELVVSAWDIISGDAKPGTNVLIFDDAGDHAALQAAEFLATAGARVEIMTPDRSFAPEVMAMNLVPYMRCLQKLDVTFTVTYRLEAVEKSGNELVAHVGSDYGGISKQRTFDQVVVNHGTIPLDELYFELKPFSSNLGEIAHDQMIAGEPQSVVRNAEGKFQLFRIGDAVAARNTHAAIYDALRLLKDI.

FMN contacts are provided by residues Gly59, Gln102, Arg220, Lys299, and 321–322; that span reads TR. 3 residues coordinate [4Fe-4S] cluster: Cys345, Cys351, and Cys363. Residues Ala396, Glu415, Gln423, Arg433, and Ala460 each contribute to the FAD site.

In the N-terminal section; belongs to the NADH:flavin oxidoreductase/NADH oxidase family. Requires FMN as cofactor. FAD is required as a cofactor. The cofactor is [4Fe-4S] cluster.

It carries out the reaction N-methyl-L-proline + NAD(+) + H2O = L-proline + formaldehyde + NADH + H(+). The protein operates within amine and polyamine degradation; stachydrine degradation. Functionally, possible NADH-dependent oxidase, may function as a demethylase that converts N-methylproline to proline. The sequence is that of Probable N-methylproline demethylase from Rhizobium meliloti (strain 1021) (Ensifer meliloti).